Reading from the N-terminus, the 219-residue chain is Proteasome subunit beta type-9 (219 aa).

The propeptide at 1–20 (MLRTGAPNGDLPRAGEVHTG) is removed in mature form. The Nucleophile role is filled by Thr21. An N6-acetyllysine mark is found at Lys53 and Lys109.

This sequence belongs to the peptidase T1B family. The 26S proteasome consists of a 20S proteasome core and two 19S regulatory subunits. The 20S proteasome core is composed of 28 subunits that are arranged in four stacked rings, resulting in a barrel-shaped structure. The two end rings are each formed by seven alpha subunits, and the two central rings are each formed by seven beta subunits. The catalytic chamber with the active sites is on the inside of the barrel. Component of the immunoproteasome, where it displaces the equivalent housekeeping subunit PSMB6. Component of the spermatoproteasome, a form of the proteasome specifically found in testis. Autocleaved. The resulting N-terminal Thr residue of the mature subunit is responsible for the nucleophile proteolytic activity.

It is found in the cytoplasm. The protein resides in the nucleus. The enzyme catalyses Cleavage of peptide bonds with very broad specificity.. Functionally, the proteasome is a multicatalytic proteinase complex which is characterized by its ability to cleave peptides with Arg, Phe, Tyr, Leu, and Glu adjacent to the leaving group at neutral or slightly basic pH. The proteasome has an ATP-dependent proteolytic activity. This subunit is involved in antigen processing to generate class I binding peptides. The chain is Proteasome subunit beta type-9 (PSMB9) from Bos taurus (Bovine).